Here is a 97-residue protein sequence, read N- to C-terminus: Small ribosomal subunit protein uS19 (97 aa).

The disordered stretch occupies residues 74–97; it reads FSPTRRFGGHPDKKAVKGKIEKQG. Positions 82–97 are enriched in basic and acidic residues; that stretch reads GHPDKKAVKGKIEKQG.

This sequence belongs to the universal ribosomal protein uS19 family.

Protein S19 forms a complex with S13 that binds strongly to the 16S ribosomal RNA. This chain is Small ribosomal subunit protein uS19, found in Petrotoga mobilis (strain DSM 10674 / SJ95).